Reading from the N-terminus, the 428-residue chain is Gamma-glutamyl phosphate reductase (428 aa).

It belongs to the gamma-glutamyl phosphate reductase family.

Its subcellular location is the cytoplasm. It carries out the reaction L-glutamate 5-semialdehyde + phosphate + NADP(+) = L-glutamyl 5-phosphate + NADPH + H(+). Its pathway is amino-acid biosynthesis; L-proline biosynthesis; L-glutamate 5-semialdehyde from L-glutamate: step 2/2. Catalyzes the NADPH-dependent reduction of L-glutamate 5-phosphate into L-glutamate 5-semialdehyde and phosphate. The product spontaneously undergoes cyclization to form 1-pyrroline-5-carboxylate. This Streptomyces coelicolor (strain ATCC BAA-471 / A3(2) / M145) protein is Gamma-glutamyl phosphate reductase.